The chain runs to 365 residues: UDP-N-acetylglucosamine--N-acetylmuramyl-(pentapeptide) pyrophosphoryl-undecaprenol N-acetylglucosamine transferase (365 aa).

UDP-N-acetyl-alpha-D-glucosamine is bound by residues 19-21, Asn-131, Arg-170, Ser-201, Ile-255, 274-279, and Gln-300; these read TGG and ALTVTE.

It belongs to the glycosyltransferase 28 family. MurG subfamily.

It localises to the cell inner membrane. The catalysed reaction is di-trans,octa-cis-undecaprenyl diphospho-N-acetyl-alpha-D-muramoyl-L-alanyl-D-glutamyl-meso-2,6-diaminopimeloyl-D-alanyl-D-alanine + UDP-N-acetyl-alpha-D-glucosamine = di-trans,octa-cis-undecaprenyl diphospho-[N-acetyl-alpha-D-glucosaminyl-(1-&gt;4)]-N-acetyl-alpha-D-muramoyl-L-alanyl-D-glutamyl-meso-2,6-diaminopimeloyl-D-alanyl-D-alanine + UDP + H(+). The protein operates within cell wall biogenesis; peptidoglycan biosynthesis. In terms of biological role, cell wall formation. Catalyzes the transfer of a GlcNAc subunit on undecaprenyl-pyrophosphoryl-MurNAc-pentapeptide (lipid intermediate I) to form undecaprenyl-pyrophosphoryl-MurNAc-(pentapeptide)GlcNAc (lipid intermediate II). This Acinetobacter baumannii (strain ACICU) protein is UDP-N-acetylglucosamine--N-acetylmuramyl-(pentapeptide) pyrophosphoryl-undecaprenol N-acetylglucosamine transferase.